The chain runs to 407 residues: Peptidase T (407 aa).

His-82 contributes to the Zn(2+) binding site. Residue Asp-84 is part of the active site. Asp-143 lines the Zn(2+) pocket. Glu-177 acts as the Proton acceptor in catalysis. The Zn(2+) site is built by Glu-178, Asp-200, and His-382.

Belongs to the peptidase M20B family. Zn(2+) serves as cofactor.

The protein localises to the cytoplasm. The catalysed reaction is Release of the N-terminal residue from a tripeptide.. In terms of biological role, cleaves the N-terminal amino acid of tripeptides. In Streptococcus pyogenes serotype M49 (strain NZ131), this protein is Peptidase T.